Consider the following 273-residue polypeptide: Cell division protein FtsQ (273 aa).

Topologically, residues 1–20 (MPPRKAHTTRRTPAKKSGVR) are cytoplasmic. Residues 21 to 43 (RRLLRLLVTGVPVLALCGVAWLW) form a helical membrane-spanning segment. The Periplasmic portion of the chain corresponds to 44–273 (LESVRLTRIE…STQKSAMGHE (230 aa)). The POTRA domain occupies 47–115 (VRLTRIEIVG…GTLRIAVEER (69 aa)).

This sequence belongs to the FtsQ/DivIB family. FtsQ subfamily.

It localises to the cell inner membrane. Functionally, essential cell division protein. This Rhodothermus marinus (strain ATCC 43812 / DSM 4252 / R-10) (Rhodothermus obamensis) protein is Cell division protein FtsQ.